The primary structure comprises 519 residues: ATP synthase subunit alpha 2 (519 aa).

Position 179–186 (179–186 (GDRQTGKT)) interacts with ATP.

Belongs to the ATPase alpha/beta chains family. As to quaternary structure, F-type ATPases have 2 components, CF(1) - the catalytic core - and CF(0) - the membrane proton channel. CF(1) has five subunits: alpha(3), beta(3), gamma(1), delta(1), epsilon(1). CF(0) has three main subunits: a(1), b(2) and c(9-12). The alpha and beta chains form an alternating ring which encloses part of the gamma chain. CF(1) is attached to CF(0) by a central stalk formed by the gamma and epsilon chains, while a peripheral stalk is formed by the delta and b chains.

It localises to the cell inner membrane. The catalysed reaction is ATP + H2O + 4 H(+)(in) = ADP + phosphate + 5 H(+)(out). Functionally, produces ATP from ADP in the presence of a proton gradient across the membrane. The alpha chain is a regulatory subunit. This is ATP synthase subunit alpha 2 from Syntrophus aciditrophicus (strain SB).